Reading from the N-terminus, the 640-residue chain is Chaperone protein DnaK (640 aa).

Thr199 is modified (phosphothreonine; by autocatalysis). Positions 603 to 640 are disordered; the sequence is YAAGETESSAAEPGEPQEKTVDAEVVDAEFEEVKDDKK. The span at 626–640 shows a compositional bias: acidic residues; sequence EVVDAEFEEVKDDKK.

It belongs to the heat shock protein 70 family.

In terms of biological role, acts as a chaperone. This chain is Chaperone protein DnaK, found in Methylobacillus flagellatus (strain ATCC 51484 / DSM 6875 / VKM B-1610 / KT).